A 523-amino-acid polypeptide reads, in one-letter code: UDP-N-acetylmuramyl-tripeptide synthetase (523 aa).

A UDP-N-acetyl-alpha-D-muramoyl-L-alanyl-D-glutamate-binding site is contributed by S38. 116–122 (GTKGKTT) contacts ATP. Residues 162 to 163 (TT), S189, and R197 contribute to the UDP-N-acetyl-alpha-D-muramoyl-L-alanyl-D-glutamate site. K231 carries the post-translational modification N6-carboxylysine.

The protein belongs to the MurCDEF family. MurE subfamily. Post-translationally, carboxylation is probably crucial for Mg(2+) binding and, consequently, for the gamma-phosphate positioning of ATP.

Its subcellular location is the cytoplasm. It participates in cell wall biogenesis; peptidoglycan biosynthesis. Its function is as follows. Catalyzes the addition of an amino acid to the nucleotide precursor UDP-N-acetylmuramoyl-L-alanyl-D-glutamate (UMAG) in the biosynthesis of bacterial cell-wall peptidoglycan. This Lactobacillus acidophilus (strain ATCC 700396 / NCK56 / N2 / NCFM) protein is UDP-N-acetylmuramyl-tripeptide synthetase.